The chain runs to 463 residues: Sodium-coupled neutral amino acid transporter 7 (463 aa).

A Phosphoserine modification is found at Ser28. 11 consecutive transmembrane segments (helical) span residues 56–76 (AVFI…PAAF), 82–102 (VAAG…GLVI), 130–150 (LCEV…LIII), 179–199 (FTIS…KEIG), 206–226 (FLSV…YIWP), 240–260 (ASWM…QCHV), 283–303 (AAMV…FLTF), 320–340 (VAVA…YPIL), 372–392 (VLQT…IPDI), 396–416 (ISVI…LCLI), and 429–449 (ASWW…AFIF).

It belongs to the amino acid/polyamine transporter 2 family. As to quaternary structure, interacts with the mTORC1 complex; this interaction mediates the recruitment of mTORC1 to the lysosome and its subsequent activation. In terms of tissue distribution, highly expressed in the brain, including the hippocampus, especially in the granular layer of dentate gyrus cells and the pyramidal cell layer of the hippocampus, amygdala, thalamus, hypothalamus, in the layer of Purkinje cells in the cerebellum and the layers of cortex. Particularly strong expression in neurons of the ventromedial hypothalamus, basolateral amygdala, ventral tegmental area, and locus coeruleus. Not detected in glial cells, including astrocytes. In addition to brain, also expressed in the spinal cord (at protein level).

Its subcellular location is the lysosome membrane. It is found in the cell projection. The protein localises to the axon. It catalyses the reaction L-glutamine(in) + Na(+)(in) = L-glutamine(out) + Na(+)(out). The enzyme catalyses L-asparagine(in) + Na(+)(in) = L-asparagine(out) + Na(+)(out). In terms of biological role, symporter that selectively cotransports sodium ions and amino acids, such as L-glutamine and L-asparagine from the lysosome into the cytoplasm and may participates in mTORC1 activation. The transport activity requires an acidic lysosomal lumen. In Mus musculus (Mouse), this protein is Sodium-coupled neutral amino acid transporter 7.